A 204-amino-acid chain; its full sequence is Serotonin N-acetyltransferase (204 aa).

T28 carries the phosphothreonine; by PKA modification. The region spanning S32–Q193 is the N-acetyltransferase domain. L121 is a substrate binding site. Residues L121–V123 and Q129–P134 contribute to the acetyl-CoA site. A substrate-binding site is contributed by M156. Residue Y165–R167 participates in acetyl-CoA binding. S202 carries the post-translational modification Phosphoserine.

This sequence belongs to the acetyltransferase family. AANAT subfamily. As to quaternary structure, monomer. Interacts with several 14-3-3 proteins, including YWHAB, YWHAE, YWHAG and YWHAZ, preferentially when phosphorylated at Thr-28. Phosphorylation on Ser-202 also allows binding to YWHAZ, but with lower affinity. The interaction with YWHAZ considerably increases affinity for arylalkylamines and acetyl-CoA and protects the enzyme from dephosphorylation and proteasomal degradation. It may also prevent thiol-dependent inactivation. In terms of processing, cAMP-dependent phosphorylation regulates AANAT activity by promoting interaction with 14-3-3 proteins. Phosphorylation levels exhibit night/day variations, with an increase during nighttime. Highly expressed in pineal gland and in the photoreceptor outer segments in the retina. Expressed at about 100-fold lower levels in the pituitary gland and testis. Not detected in other tissues.

Its subcellular location is the cytoplasm. It catalyses the reaction a 2-arylethylamine + acetyl-CoA = an N-acetyl-2-arylethylamine + CoA + H(+). It functions in the pathway aromatic compound metabolism; melatonin biosynthesis; melatonin from serotonin: step 1/2. Its function is as follows. Controls the night/day rhythm of melatonin production in the pineal gland. Catalyzes the N-acetylation of serotonin into N-acetylserotonin, the penultimate step in the synthesis of melatonin. The protein is Serotonin N-acetyltransferase (AANAT) of Macaca mulatta (Rhesus macaque).